Here is a 326-residue protein sequence, read N- to C-terminus: Vitamin B12 import system permease protein BtuC (326 aa).

Transmembrane regions (helical) follow at residues 13 to 35 (IRWL…CAGE), 55 to 77 (IRLP…GAVM), 90 to 107 (LLGV…AVLL), 111 to 133 (QLPN…LILL), 146 to 168 (LLAG…YFST), 188 to 205 (WRQS…LWIC), 242 to 264 (MVGV…PHIL), 274 to 296 (VLLP…VARL), and 303 to 322 (LPIG…WLLL).

This sequence belongs to the binding-protein-dependent transport system permease family. FecCD subfamily. As to quaternary structure, the complex is composed of two ATP-binding proteins (BtuD), two transmembrane proteins (BtuC) and a solute-binding protein (BtuF).

The protein resides in the cell inner membrane. Part of the ABC transporter complex BtuCDF involved in vitamin B12 import. Involved in the translocation of the substrate across the membrane. The chain is Vitamin B12 import system permease protein BtuC from Shigella flexneri.